The chain runs to 423 residues: Adenylosuccinate synthetase (423 aa).

GTP contacts are provided by residues 12–18 (GDEGKGK) and 40–42 (GHT). The active-site Proton acceptor is Asp13. 2 residues coordinate Mg(2+): Asp13 and Gly40. IMP-binding positions include 13-16 (DEGK), 38-41 (NAGH), Thr129, Arg143, Gln221, Thr236, and Arg300. His41 acts as the Proton donor in catalysis. 296 to 302 (AVTGRKR) contacts substrate. Residues Arg302, 328–330 (KSD), and 408–410 (SVG) contribute to the GTP site.

It belongs to the adenylosuccinate synthetase family. Homodimer. Requires Mg(2+) as cofactor.

It is found in the cytoplasm. It carries out the reaction IMP + L-aspartate + GTP = N(6)-(1,2-dicarboxyethyl)-AMP + GDP + phosphate + 2 H(+). Its pathway is purine metabolism; AMP biosynthesis via de novo pathway; AMP from IMP: step 1/2. Its function is as follows. Plays an important role in the de novo pathway of purine nucleotide biosynthesis. Catalyzes the first committed step in the biosynthesis of AMP from IMP. This Parabacteroides distasonis (strain ATCC 8503 / DSM 20701 / CIP 104284 / JCM 5825 / NCTC 11152) protein is Adenylosuccinate synthetase.